We begin with the raw amino-acid sequence, 431 residues long: Dihydroorotase (431 aa).

Zn(2+) contacts are provided by H59 and H61. Residues 61–63 and N93 each bind substrate; that span reads HLR. 4 residues coordinate Zn(2+): D151, H178, H231, and D304. Residue D304 is part of the active site. Substrate is bound by residues H308 and 322–323; that span reads FG.

Belongs to the metallo-dependent hydrolases superfamily. DHOase family. Class I DHOase subfamily. It depends on Zn(2+) as a cofactor.

It carries out the reaction (S)-dihydroorotate + H2O = N-carbamoyl-L-aspartate + H(+). The protein operates within pyrimidine metabolism; UMP biosynthesis via de novo pathway; (S)-dihydroorotate from bicarbonate: step 3/3. Its function is as follows. Catalyzes the reversible cyclization of carbamoyl aspartate to dihydroorotate. In Caldanaerobacter subterraneus subsp. tengcongensis (strain DSM 15242 / JCM 11007 / NBRC 100824 / MB4) (Thermoanaerobacter tengcongensis), this protein is Dihydroorotase.